A 185-amino-acid polypeptide reads, in one-letter code: Ribosome-recycling factor (185 aa).

It belongs to the RRF family.

It localises to the cytoplasm. Functionally, responsible for the release of ribosomes from messenger RNA at the termination of protein biosynthesis. May increase the efficiency of translation by recycling ribosomes from one round of translation to another. This Streptomyces avermitilis (strain ATCC 31267 / DSM 46492 / JCM 5070 / NBRC 14893 / NCIMB 12804 / NRRL 8165 / MA-4680) protein is Ribosome-recycling factor.